Here is a 498-residue protein sequence, read N- to C-terminus: Glycerol kinase (498 aa).

Thr13 serves as a coordination point for ADP. ATP-binding residues include Thr13, Thr14, and Ser15. Thr13 is a sn-glycerol 3-phosphate binding site. Arg17 lines the ADP pocket. Positions 83, 84, 135, and 244 each coordinate sn-glycerol 3-phosphate. 5 residues coordinate glycerol: Arg83, Glu84, Tyr135, Asp244, and Gln245. ADP contacts are provided by Thr266 and Gly309. Residues Thr266, Gly309, Gln313, and Gly410 each contribute to the ATP site. ADP contacts are provided by Gly410 and Asn414.

This sequence belongs to the FGGY kinase family.

The catalysed reaction is glycerol + ATP = sn-glycerol 3-phosphate + ADP + H(+). It participates in polyol metabolism; glycerol degradation via glycerol kinase pathway; sn-glycerol 3-phosphate from glycerol: step 1/1. Inhibited by fructose 1,6-bisphosphate (FBP). Functionally, key enzyme in the regulation of glycerol uptake and metabolism. Catalyzes the phosphorylation of glycerol to yield sn-glycerol 3-phosphate. In Koribacter versatilis (strain Ellin345), this protein is Glycerol kinase.